A 125-amino-acid chain; its full sequence is Small ribosomal subunit protein uS12 (125 aa).

Position 89 is a 3-methylthioaspartic acid (D89).

The protein belongs to the universal ribosomal protein uS12 family. Part of the 30S ribosomal subunit. Contacts proteins S8 and S17. May interact with IF1 in the 30S initiation complex.

In terms of biological role, with S4 and S5 plays an important role in translational accuracy. Its function is as follows. Interacts with and stabilizes bases of the 16S rRNA that are involved in tRNA selection in the A site and with the mRNA backbone. Located at the interface of the 30S and 50S subunits, it traverses the body of the 30S subunit contacting proteins on the other side and probably holding the rRNA structure together. The combined cluster of proteins S8, S12 and S17 appears to hold together the shoulder and platform of the 30S subunit. This chain is Small ribosomal subunit protein uS12, found in Wigglesworthia glossinidia brevipalpis.